The following is a 346-amino-acid chain: Phosphate acyltransferase (346 aa).

The protein belongs to the PlsX family. In terms of assembly, homodimer. Probably interacts with PlsY.

Its subcellular location is the cytoplasm. It carries out the reaction a fatty acyl-[ACP] + phosphate = an acyl phosphate + holo-[ACP]. It functions in the pathway lipid metabolism; phospholipid metabolism. Catalyzes the reversible formation of acyl-phosphate (acyl-PO(4)) from acyl-[acyl-carrier-protein] (acyl-ACP). This enzyme utilizes acyl-ACP as fatty acyl donor, but not acyl-CoA. The polypeptide is Phosphate acyltransferase (Psychromonas ingrahamii (strain DSM 17664 / CCUG 51855 / 37)).